The chain runs to 1399 residues: DNA-directed RNA polymerase subunit beta' (1399 aa).

4 residues coordinate Zn(2+): cysteine 70, cysteine 72, cysteine 85, and cysteine 88. Residues aspartate 460, aspartate 462, and aspartate 464 each contribute to the Mg(2+) site. 4 residues coordinate Zn(2+): cysteine 814, cysteine 888, cysteine 895, and cysteine 898.

This sequence belongs to the RNA polymerase beta' chain family. In terms of assembly, the RNAP catalytic core consists of 2 alpha, 1 beta, 1 beta' and 1 omega subunit. When a sigma factor is associated with the core the holoenzyme is formed, which can initiate transcription. Requires Mg(2+) as cofactor. It depends on Zn(2+) as a cofactor.

It carries out the reaction RNA(n) + a ribonucleoside 5'-triphosphate = RNA(n+1) + diphosphate. DNA-dependent RNA polymerase catalyzes the transcription of DNA into RNA using the four ribonucleoside triphosphates as substrates. This chain is DNA-directed RNA polymerase subunit beta', found in Pseudomonas savastanoi pv. phaseolicola (strain 1448A / Race 6) (Pseudomonas syringae pv. phaseolicola (strain 1448A / Race 6)).